Consider the following 328-residue polypeptide: Thiamine-monophosphate kinase (328 aa).

Mg(2+) is bound by residues aspartate 30, threonine 45, threonine 46, and aspartate 47. A substrate-binding site is contributed by histidine 54. Mg(2+) contacts are provided by aspartate 75 and aspartate 122. Residues 121 to 122 (GD) and arginine 146 each bind ATP. Aspartate 211 is a binding site for Mg(2+). Residue serine 213 participates in ATP binding. Residue aspartate 214 participates in Mg(2+) binding. 2 residues coordinate substrate: glutamate 262 and phenylalanine 321.

It belongs to the thiamine-monophosphate kinase family.

It carries out the reaction thiamine phosphate + ATP = thiamine diphosphate + ADP. It functions in the pathway cofactor biosynthesis; thiamine diphosphate biosynthesis; thiamine diphosphate from thiamine phosphate: step 1/1. Its function is as follows. Catalyzes the ATP-dependent phosphorylation of thiamine-monophosphate (TMP) to form thiamine-pyrophosphate (TPP), the active form of vitamin B1. This is Thiamine-monophosphate kinase from Haemophilus influenzae (strain ATCC 51907 / DSM 11121 / KW20 / Rd).